The primary structure comprises 67 residues: Small ribosomal subunit protein eS17 (67 aa).

The protein belongs to the eukaryotic ribosomal protein eS17 family. In terms of assembly, part of the 30S ribosomal subunit.

The chain is Small ribosomal subunit protein eS17 from Thermococcus kodakarensis (strain ATCC BAA-918 / JCM 12380 / KOD1) (Pyrococcus kodakaraensis (strain KOD1)).